Reading from the N-terminus, the 623-residue chain is Glutamine--fructose-6-phosphate aminotransferase [isomerizing] (623 aa).

The active-site Nucleophile; for GATase activity is Cys-2. Positions 2-228 (CGIVGYIGQA…NDQVVTITAD (227 aa)) constitute a Glutamine amidotransferase type-2 domain. SIS domains follow at residues 295–435 (IDES…LRGN) and 468–613 (LGRS…VDQP). The active-site For Fru-6P isomerization activity is Lys-618.

In terms of assembly, homodimer.

It localises to the cytoplasm. The catalysed reaction is D-fructose 6-phosphate + L-glutamine = D-glucosamine 6-phosphate + L-glutamate. Functionally, catalyzes the first step in hexosamine metabolism, converting fructose-6P into glucosamine-6P using glutamine as a nitrogen source. In Corynebacterium efficiens (strain DSM 44549 / YS-314 / AJ 12310 / JCM 11189 / NBRC 100395), this protein is Glutamine--fructose-6-phosphate aminotransferase [isomerizing].